The primary structure comprises 276 residues: Kallikrein-11 (276 aa).

The N-terminal stretch at 1 to 44 (MRRLKSDWKLSTETREPGARPALLQARMILRLIALALVTGHVGG) is a signal peptide. Positions 45–47 (ETR) are cleaved as a propeptide — activation peptide. Positions 48-274 (IIKGYECRPH…YFNWIHEVMR (227 aa)) constitute a Peptidase S1 domain. 5 cysteine pairs are disulfide-bonded: Cys-54/Cys-189, Cys-73/Cys-89, Cys-168/Cys-235, Cys-200/Cys-214, and Cys-225/Cys-250. Catalysis depends on His-88, which acts as the Charge relay system. Asn-125 carries N-linked (GlcNAc...) asparagine glycosylation. Asp-136 acts as the Charge relay system in catalysis. N-linked (GlcNAc...) asparagine glycans are attached at residues Asn-191 and Asn-207. The active-site Charge relay system is Ser-229. An N-linked (GlcNAc...) asparagine glycan is attached at Asn-236.

Belongs to the peptidase S1 family. Kallikrein subfamily. As to expression, expressed in brain and prostate (isoform 1) and prostate (isoform 2).

The protein resides in the secreted. Possible multifunctional protease. Efficiently cleaves 'bz-Phe-Arg-4-methylcoumaryl-7-amide', a kallikrein substrate, and weakly cleaves other substrates for kallikrein and trypsin. This is Kallikrein-11 (Klk11) from Mus musculus (Mouse).